A 384-amino-acid chain; its full sequence is Glucans biosynthesis protein C (384 aa).

Helical transmembrane passes span 17 to 37 (AWLMLLGIPFHISLIYSTHSW), 54 to 74 (FIHAFRMQVFFVISGYFSYML), 91 to 111 (VGIPMLTAIPLLTLPQFILLQ), 140 to 160 (LWFLLVLVILTTVSIGIFTWF), 173 to 193 (AISLAKLSLIFFLLGIAYAAI), 212 to 232 (FIVMQTLFYVPFFILGALAFI), 240 to 260 (FTTPSRGCTLGAAVAFIAYLL), 274 to 294 (TESVITMVMGLWMVNVVFSLG), 311 to 331 (ASLFIYLVHHPLTLFFGAYIT), and 338 to 358 (LIGFLCGLIFVMGIALILYEI).

It belongs to the acyltransferase 3 family. OpgC subfamily.

It is found in the cell membrane. The protein operates within glycan metabolism; osmoregulated periplasmic glucan (OPG) biosynthesis. Necessary for the succinyl substitution of periplasmic glucans. Could catalyze the transfer of succinyl residues from the cytoplasmic side of the membrane to the nascent glucan backbones on the periplasmic side of the membrane. The sequence is that of Glucans biosynthesis protein C from Salmonella schwarzengrund (strain CVM19633).